The following is a 128-amino-acid chain: Sulfurtransferase TusD (128 aa).

Cys-78 serves as the catalytic Cysteine persulfide intermediate.

It belongs to the DsrE/TusD family. In terms of assembly, heterohexamer, formed by a dimer of trimers. The hexameric TusBCD complex contains 2 copies each of TusB, TusC and TusD. The TusBCD complex interacts with TusE.

The protein localises to the cytoplasm. Part of a sulfur-relay system required for 2-thiolation of 5-methylaminomethyl-2-thiouridine (mnm(5)s(2)U) at tRNA wobble positions. Accepts sulfur from TusA and transfers it in turn to TusE. The protein is Sulfurtransferase TusD of Klebsiella pneumoniae (strain 342).